The chain runs to 210 residues: Glutathione S-transferase-like protein FUS3 (210 aa).

In terms of domain architecture, GST N-terminal spans 1–74 (MPNARVFKIL…YVAQSGPQAS (74 aa)). Positions 80 to 206 (DAMSSAKIRQ…GKPNFIEKRR (127 aa)) constitute a GST C-terminal domain.

Belongs to the GST superfamily.

In terms of biological role, glutathione S-transferase-like protein; part of the gene cluster that mediates the biosynthesis of the mycotoxin fusarin C. Within the cluster, FUS1, FUS2, FUS8 and FUS9 are sufficient for fusarin production. The other FUS cluster members are not essential for fusarin C biosynthesis. This Gibberella fujikuroi (strain CBS 195.34 / IMI 58289 / NRRL A-6831) (Bakanae and foot rot disease fungus) protein is Glutathione S-transferase-like protein FUS3.